Consider the following 543-residue polypeptide: Zinc finger CCHC domain-containing protein 7 (543 aa).

The disordered stretch occupies residues 51 to 71 (EEEHEEKNSGNSESSSSKPNQ). Positions 59–68 (SGNSESSSSK) are enriched in low complexity. Glycyl lysine isopeptide (Lys-Gly) (interchain with G-Cter in SUMO2) cross-links involve residues Lys-131, Lys-139, Lys-141, Lys-239, and Lys-254. CCHC-type zinc fingers lie at residues 241 to 258 (IICR…NCPL), 263 to 280 (RRCF…SCPA), and 304 to 321 (KQCD…ACTE). Lys-339 participates in a covalent cross-link: Glycyl lysine isopeptide (Lys-Gly) (interchain with G-Cter in SUMO2). The segment at 348–365 (AYCYHCAQKGHYGHECPE) adopts a CCHC-type 4 zinc-finger fold. Residues Lys-412, Lys-417, and Lys-435 each participate in a glycyl lysine isopeptide (Lys-Gly) (interchain with G-Cter in SUMO2) cross-link. Positions 414-543 (PYIKAANENP…FLIKQRKKKS (130 aa)) are disordered. Composition is skewed to basic and acidic residues over residues 441–457 (QENK…NRNW) and 465–475 (RHREVDEDFPR). Lys-478 participates in a covalent cross-link: Glycyl lysine isopeptide (Lys-Gly) (interchain with G-Cter in SUMO2). Residues 479–491 (TYSSPGSFKTQKP) are compositionally biased toward polar residues. A phosphoserine mark is found at Ser-482 and Ser-485. Residues Lys-487, Lys-490, and Lys-493 each participate in a glycyl lysine isopeptide (Lys-Gly) (interchain with G-Cter in SUMO2) cross-link. The span at 493 to 502 (KPFHRSSHYH) shows a compositional bias: basic residues. The span at 503–515 (TSREDKSPKEGKR) shows a compositional bias: basic and acidic residues. Lys-537 participates in a covalent cross-link: Glycyl lysine isopeptide (Lys-Gly) (interchain with G-Cter in SUMO2).

In terms of assembly, component of a nucleolar TRAMP-like complex, an ATP-dependent exosome regulatory complex consisting of a helicase (MTREX), an oligadenylate polymerase (TENT4B or TENT4A), and a substrate specific RNA-binding factor (ZCCHC7 or ZCCHC8). Several TRAMP-like complexes exist with specific compositions and are associated with nuclear, or nucleolar RNA exosomes.

The protein resides in the nucleus. The protein localises to the nucleolus. This is Zinc finger CCHC domain-containing protein 7 (ZCCHC7) from Homo sapiens (Human).